The primary structure comprises 470 residues: Isocitrate dehydrogenase (NAD(+)), mitochondrial (470 aa).

The N-terminal 26 residues, 1–26 (MTRVERGRVLARAIERAVAHRASARR), are a transit peptide targeting the mitochondrion. Residues 138 to 140 (TVT) and Asn-159 each bind NAD(+). D-threo-isocitrate is bound by residues 157 to 163 (SPNGAMR), Arg-193, Tyr-200, Lys-275, and Asp-319. Asp-319 is a Mg(2+) binding site. Lys-324 lines the NAD(+) pocket. Asp-343 serves as a coordination point for D-threo-isocitrate. Residues Asp-343 and Asp-347 each contribute to the Mg(2+) site. Residues 380-385 (HGTVAD) and Asn-399 each bind NAD(+).

The protein belongs to the isocitrate and isopropylmalate dehydrogenases family. As to quaternary structure, forms homodimers. The cofactor is Mg(2+). Mn(2+) serves as cofactor.

It is found in the mitochondrion. It catalyses the reaction D-threo-isocitrate + NAD(+) = 2-oxoglutarate + CO2 + NADH. With respect to regulation, the homodimer exhibits allosteric regulation by isocitrate. Performs an essential role in the oxidative function of the tricarboxylic acid cycle and respiration. Catalyzes the decarboxylation of isocitrate to produce 2-oxoglutarate and generate NADH to provide electrons for energy production. The chain is Isocitrate dehydrogenase (NAD(+)), mitochondrial from Ostreococcus tauri.